The primary structure comprises 575 residues: Phosphoenolpyruvate-protein phosphotransferase (575 aa).

Histidine 189 functions as the Tele-phosphohistidine intermediate in the catalytic mechanism. Residues arginine 296 and arginine 332 each contribute to the phosphoenolpyruvate site. Mg(2+) contacts are provided by glutamate 431 and aspartate 455. Phosphoenolpyruvate-binding positions include 454–455 and arginine 465; that span reads ND. Cysteine 502 serves as the catalytic Proton donor.

This sequence belongs to the PEP-utilizing enzyme family. Homodimer. The cofactor is Mg(2+).

The protein resides in the cytoplasm. It carries out the reaction L-histidyl-[protein] + phosphoenolpyruvate = N(pros)-phospho-L-histidyl-[protein] + pyruvate. Its function is as follows. General (non sugar-specific) component of the phosphoenolpyruvate-dependent sugar phosphotransferase system (sugar PTS). This major carbohydrate active-transport system catalyzes the phosphorylation of incoming sugar substrates concomitantly with their translocation across the cell membrane. Enzyme I transfers the phosphoryl group from phosphoenolpyruvate (PEP) to the phosphoryl carrier protein (HPr). The chain is Phosphoenolpyruvate-protein phosphotransferase (ptsI) from Salmonella typhimurium (strain LT2 / SGSC1412 / ATCC 700720).